A 126-amino-acid chain; its full sequence is Nascent polypeptide-associated complex protein (126 aa).

Residues 10 to 77 (PRMMKQMQKM…AKKVAKAEEK (68 aa)) form the NAC-A/B domain.

It belongs to the NAC-alpha family. As to quaternary structure, homodimer. Interacts with the ribosome. Binds ribosomal RNA.

Functionally, contacts the emerging nascent chain on the ribosome. This is Nascent polypeptide-associated complex protein from Methanococcus maripaludis (strain C6 / ATCC BAA-1332).